The following is a 55-amino-acid chain: Mitochondrial import receptor subunit TOM7 homolog (55 aa).

Residues 1–20 (MVKLSKEAKQRLQQLFKGGQ) lie on the Cytoplasmic side of the membrane. Residues 21–36 (FAIRWGFIPLVIYLGF) form a helical membrane-spanning segment. Topologically, residues 37–55 (KRGADPGMPEPTVLSLLWG) are mitochondrial intermembrane.

It belongs to the Tom7 family. As to quaternary structure, forms part of the preprotein translocase complex of the outer mitochondrial membrane (TOM complex) which consists of at least 7 different proteins (TOMM5, TOMM6, TOMM7, TOMM20, TOMM22, TOMM40 and TOMM70).

It localises to the mitochondrion outer membrane. Required for assembly and stability of the TOM complex. Positive regulator of PRKN translocation to damaged mitochondria. Acts probably by stabilizing PINK1 on the outer membrane of depolarized mitochondria. This chain is Mitochondrial import receptor subunit TOM7 homolog (TOMM7), found in Bos taurus (Bovine).